We begin with the raw amino-acid sequence, 194 residues long: Imidazoleglycerol-phosphate dehydratase (194 aa).

It belongs to the imidazoleglycerol-phosphate dehydratase family.

It is found in the cytoplasm. It catalyses the reaction D-erythro-1-(imidazol-4-yl)glycerol 3-phosphate = 3-(imidazol-4-yl)-2-oxopropyl phosphate + H2O. Its pathway is amino-acid biosynthesis; L-histidine biosynthesis; L-histidine from 5-phospho-alpha-D-ribose 1-diphosphate: step 6/9. The chain is Imidazoleglycerol-phosphate dehydratase from Bacillus cereus (strain ZK / E33L).